We begin with the raw amino-acid sequence, 110 residues long: MKLKKKFLEKSKKIAEERIDVLMNLAEKESKAGKIDRSKNYVLLGKKIAMRMRMPYPKEWKRRICKNCGSFLIYGKNARVRTKAKNYPHVVITCLECNSITRIPIKSEKK.

4 residues coordinate Zn(2+): Cys-65, Cys-68, Cys-94, and Cys-97.

The protein belongs to the eukaryotic/archaeal RNase P protein component 4 family. Consists of a catalytic RNA component and at least 4-5 protein subunits. Zn(2+) serves as cofactor.

The protein resides in the cytoplasm. The enzyme catalyses Endonucleolytic cleavage of RNA, removing 5'-extranucleotides from tRNA precursor.. In terms of biological role, part of ribonuclease P, a protein complex that generates mature tRNA molecules by cleaving their 5'-ends. In Methanococcus maripaludis (strain C5 / ATCC BAA-1333), this protein is Ribonuclease P protein component 4.